The following is a 238-amino-acid chain: RNA-binding protein pno1 (238 aa).

One can recognise a KH domain in the interval 162–211; that stretch reads QSRAIGRLAGKGGRTKFTIENVTKTRIVLADSKIHILGSYQNIQLARRAI.

Belongs to the PNO1 family.

The protein resides in the nucleus. The protein localises to the nucleolus. The polypeptide is RNA-binding protein pno1 (l(1)G0004) (Drosophila pseudoobscura pseudoobscura (Fruit fly)).